Reading from the N-terminus, the 150-residue chain is UPF0756 membrane protein HD_1071 (150 aa).

The next 4 helical transmembrane spans lie at 1-21 (MSLQ…LGVL), 52-72 (YGLT…IVSG), 82-102 (ILSW…WLGG), and 114-134 (IITG…GIPV).

This sequence belongs to the UPF0756 family.

The protein localises to the cell membrane. The polypeptide is UPF0756 membrane protein HD_1071 (Haemophilus ducreyi (strain 35000HP / ATCC 700724)).